The sequence spans 195 residues: MSRIKLIVGLANPGAEYAATRHNAGAWYADLLAERHNQSLKEESKFFGFTARLNLGGEDVRLLVPTTFMNLSGKAVAAMATFYRIPAEEILVAHDELDLPPGVAKFKQGGGHGGHNGLKDIISRLGNNQNFHRLRIGIGHPGDRQKVVGFVLGKPQAAEQRLIDDAVDEAVRCTEVWMKEDRLKAMNRLHSFKAG.

Position 17 (Tyr-17) interacts with tRNA. The Proton acceptor role is filled by His-22. Positions 68, 70, and 116 each coordinate tRNA.

Belongs to the PTH family. Monomer.

It localises to the cytoplasm. It carries out the reaction an N-acyl-L-alpha-aminoacyl-tRNA + H2O = an N-acyl-L-amino acid + a tRNA + H(+). Its function is as follows. Hydrolyzes ribosome-free peptidyl-tRNAs (with 1 or more amino acids incorporated), which drop off the ribosome during protein synthesis, or as a result of ribosome stalling. Catalyzes the release of premature peptidyl moieties from peptidyl-tRNA molecules trapped in stalled 50S ribosomal subunits, and thus maintains levels of free tRNAs and 50S ribosomes. The polypeptide is Peptidyl-tRNA hydrolase (Erwinia tasmaniensis (strain DSM 17950 / CFBP 7177 / CIP 109463 / NCPPB 4357 / Et1/99)).